The primary structure comprises 346 residues: Holliday junction branch migration complex subunit RuvB (346 aa).

The segment at 2 to 183 is large ATPase domain (RuvB-L); it reads TDDRIIGAGA…FGIVQRLEFY (182 aa). Residues isoleucine 22, arginine 23, glycine 64, lysine 67, threonine 68, threonine 69, 130 to 132, arginine 173, tyrosine 183, and arginine 220 contribute to the ATP site; that span reads EDF. Mg(2+) is bound at residue threonine 68. Residues 184–254 form a small ATPAse domain (RuvB-S) region; it reads SVEELTRIVR…VAQAAMKMLK (71 aa). The head domain (RuvB-H) stretch occupies residues 257 to 346; the sequence is PEGFDELDRR…DLFAEVPDVG (90 aa). Residues arginine 293, arginine 312, and arginine 317 each contribute to the DNA site.

The protein belongs to the RuvB family. In terms of assembly, homohexamer. Forms an RuvA(8)-RuvB(12)-Holliday junction (HJ) complex. HJ DNA is sandwiched between 2 RuvA tetramers; dsDNA enters through RuvA and exits via RuvB. An RuvB hexamer assembles on each DNA strand where it exits the tetramer. Each RuvB hexamer is contacted by two RuvA subunits (via domain III) on 2 adjacent RuvB subunits; this complex drives branch migration. In the full resolvosome a probable DNA-RuvA(4)-RuvB(12)-RuvC(2) complex forms which resolves the HJ.

The protein resides in the cytoplasm. It catalyses the reaction ATP + H2O = ADP + phosphate + H(+). In terms of biological role, the RuvA-RuvB-RuvC complex processes Holliday junction (HJ) DNA during genetic recombination and DNA repair, while the RuvA-RuvB complex plays an important role in the rescue of blocked DNA replication forks via replication fork reversal (RFR). RuvA specifically binds to HJ cruciform DNA, conferring on it an open structure. The RuvB hexamer acts as an ATP-dependent pump, pulling dsDNA into and through the RuvAB complex. RuvB forms 2 homohexamers on either side of HJ DNA bound by 1 or 2 RuvA tetramers; 4 subunits per hexamer contact DNA at a time. Coordinated motions by a converter formed by DNA-disengaged RuvB subunits stimulates ATP hydrolysis and nucleotide exchange. Immobilization of the converter enables RuvB to convert the ATP-contained energy into a lever motion, pulling 2 nucleotides of DNA out of the RuvA tetramer per ATP hydrolyzed, thus driving DNA branch migration. The RuvB motors rotate together with the DNA substrate, which together with the progressing nucleotide cycle form the mechanistic basis for DNA recombination by continuous HJ branch migration. Branch migration allows RuvC to scan DNA until it finds its consensus sequence, where it cleaves and resolves cruciform DNA. This is Holliday junction branch migration complex subunit RuvB from Stenotrophomonas maltophilia (strain R551-3).